A 155-amino-acid polypeptide reads, in one-letter code: Putative pre-16S rRNA nuclease (155 aa).

The protein belongs to the YqgF nuclease family.

The protein resides in the cytoplasm. In terms of biological role, could be a nuclease involved in processing of the 5'-end of pre-16S rRNA. In Xylella fastidiosa (strain M12), this protein is Putative pre-16S rRNA nuclease.